A 616-amino-acid polypeptide reads, in one-letter code: Sialic acid TRAP transporter permease protein SiaT (616 aa).

The segment at 1–190 (MKYINKLEEW…RISNYIKLGS (190 aa)) is TRAP transporter small permease. Helical transmembrane passes span 9–29 (EWLG…QILS), 36–56 (PLIW…MLGI), 83–103 (TNTF…HFGI), 117–137 (GGIS…LMMF), 153–173 (YLPA…LFFA), 195–215 (IALL…WSLF), 244–264 (FPLL…TGGI), 288–308 (IGAS…AGGL), 332–352 (ASCI…YGVI), 357–377 (IAKL…ALMA), 407–427 (FWAI…LFSP), 431–451 (AIVA…ELTL), 459–479 (IEAM…TFFG), 505–525 (VLVM…ALAL), 527–547 (FLVL…LIFF), 552–572 (TLNM…FVVA), and 587–607 (LPFL…PQII). A TRAP transporter large permease region spans residues 191-616 (SSVYIALLVW…ITFVPNLLIP (426 aa)).

In the N-terminal section; belongs to the TRAP transporter small permease family. This sequence in the C-terminal section; belongs to the TRAP transporter large permease family. In terms of assembly, the complex comprises the extracytoplasmic solute receptor protein SiaP, and the fused transmembrane protein SiaT.

The protein resides in the cell inner membrane. Functionally, part of the tripartite ATP-independent periplasmic (TRAP) transport system SiaPT involved in the uptake of sialic acid. This Haemophilus influenzae (strain 86-028NP) protein is Sialic acid TRAP transporter permease protein SiaT (siaT).